A 406-amino-acid chain; its full sequence is Interactor protein for cytohesin exchange factors 1 (406 aa).

The region spanning histidine 13–threonine 112 is the PH domain. Disordered regions lie at residues threonine 118 to leucine 173, cysteine 228 to glutamate 285, and proline 383 to leucine 406. Over residues cysteine 123 to threonine 134 the composition is skewed to acidic residues. Low complexity predominate over residues alanine 144–serine 160. The span at cysteine 228–glutamate 239 shows a compositional bias: polar residues. The segment covering leucine 243–aspartate 259 has biased composition (low complexity). Over residues methionine 272 to glutamate 285 the composition is skewed to basic and acidic residues. Residues glutamate 285–leucine 406 form a necessary for interaction with PSCD2 and to translocate to the plasma membrane region. Positions glutamate 392–leucine 406 are enriched in polar residues.

Interacts with guanine-nucleotide exchange factors PSCD1, PSCD2, PSCD3 and PSCD4. In terms of tissue distribution, expressed in brain, spleen, lung, testis and kidney.

The protein localises to the cytoplasm. It localises to the cell membrane. Enhances the promotion of guanine-nucleotide exchange by PSCD2 on ARF6 in a concentration-dependent manner. The chain is Interactor protein for cytohesin exchange factors 1 (Ipcef1) from Rattus norvegicus (Rat).